Consider the following 267-residue polypeptide: MAEYNWDERHIITFPEENSALTTKDLHVYYGEKEAIKGIDMQFEKNKITALIGPSGCGKSTYLRSLNRMNDTIDIARVTGQIMYEGIDVNAQDINVYEMRKHIGMVFQRPNPFAKSIYKNITFAYERAGVKDKKFLDEVVETSLKQAALWDQVKDDLHKSAFTLSGGQQQRLCIARAIAVKPEILLMDEPASALDPIATMQLEETMFELKKNYTIIIVTHNMQQAARASDYTAFFYLGDLIEYDKTNNIFQNAKCQSTSDYVSGRFG.

The ABC transporter domain occupies 21–262 (LTTKDLHVYY…AKCQSTSDYV (242 aa)). 53–60 (GPSGCGKS) contributes to the ATP binding site.

It belongs to the ABC transporter superfamily. Phosphate importer (TC 3.A.1.7) family. The complex is composed of two ATP-binding proteins (PstB), two transmembrane proteins (PstC and PstA) and a solute-binding protein (PstS).

The protein resides in the cell membrane. It catalyses the reaction phosphate(out) + ATP + H2O = ADP + 2 phosphate(in) + H(+). Functionally, part of the ABC transporter complex PstSACB involved in phosphate import. Responsible for energy coupling to the transport system. The sequence is that of Phosphate import ATP-binding protein PstB 2 from Streptococcus agalactiae serotype Ia (strain ATCC 27591 / A909 / CDC SS700).